A 402-amino-acid chain; its full sequence is Tryptophan synthase beta chain (402 aa).

Lys-91 carries the N6-(pyridoxal phosphate)lysine modification.

This sequence belongs to the TrpB family. As to quaternary structure, tetramer of two alpha and two beta chains. Pyridoxal 5'-phosphate is required as a cofactor.

The enzyme catalyses (1S,2R)-1-C-(indol-3-yl)glycerol 3-phosphate + L-serine = D-glyceraldehyde 3-phosphate + L-tryptophan + H2O. It participates in amino-acid biosynthesis; L-tryptophan biosynthesis; L-tryptophan from chorismate: step 5/5. Its function is as follows. The beta subunit is responsible for the synthesis of L-tryptophan from indole and L-serine. This is Tryptophan synthase beta chain from Streptococcus thermophilus (strain CNRZ 1066).